Reading from the N-terminus, the 223-residue chain is 2-phospho-L-lactate guanylyltransferase (223 aa).

The protein belongs to the CofC family. In terms of assembly, homodimer.

The catalysed reaction is (2S)-2-phospholactate + GTP + H(+) = (2S)-lactyl-2-diphospho-5'-guanosine + diphosphate. It functions in the pathway cofactor biosynthesis; coenzyme F420 biosynthesis. In terms of biological role, guanylyltransferase that catalyzes the activation of (2S)-2-phospholactate (2-PL) as (2S)-lactyl-2-diphospho-5'-guanosine, via the condensation of 2-PL with GTP. It is involved in the biosynthesis of coenzyme F420, a hydride carrier cofactor. The polypeptide is 2-phospho-L-lactate guanylyltransferase (Methanothermobacter thermautotrophicus (strain ATCC 29096 / DSM 1053 / JCM 10044 / NBRC 100330 / Delta H) (Methanobacterium thermoautotrophicum)).